Here is a 104-residue protein sequence, read N- to C-terminus: Large ribosomal subunit protein bL21 (104 aa).

It belongs to the bacterial ribosomal protein bL21 family. As to quaternary structure, part of the 50S ribosomal subunit. Contacts protein L20.

Its function is as follows. This protein binds to 23S rRNA in the presence of protein L20. The sequence is that of Large ribosomal subunit protein bL21 from Streptococcus pyogenes serotype M1.